The following is a 957-amino-acid chain: Translation initiation factor IF-2 (957 aa).

Disordered regions lie at residues 34–282 and 311–367; these read KSHS…RVVK and SQSL…TIAG. Residues 107–161 are compositionally biased toward pro residues; sequence PARPQPPQAPTRPTPPAPVAPKPVEPVAAKPPAPPAKPEPTPPRPVPTLVPPPTR. The span at 163–188 shows a compositional bias: basic and acidic residues; sequence TKKEEKVAATPPPRKELKEPPKKEKG. Positions 209 to 242 are enriched in pro residues; sequence PPAPAKPPEMAPKPALPELQPPPKPVRAPNPPKP. Composition is skewed to basic and acidic residues over residues 250–259 and 266–275; these read LDDKSVSKVI and KDFDEEESKR. Residues 444–617 form the tr-type G domain; sequence RRPPVVTIMG…LLVAEVEDLY (174 aa). A G1 region spans residues 453–460; sequence GHVDHGKT. 453 to 460 contacts GTP; the sequence is GHVDHGKT. Residues 478–482 form a G2 region; it reads GITQH. The G3 stretch occupies residues 503–506; sequence DTPG. Residues 503-507 and 557-560 each bind GTP; these read DTPGH and NKID. Residues 557–560 form a G4 region; the sequence is NKID. The G5 stretch occupies residues 593–595; that stretch reads SAL.

This sequence belongs to the TRAFAC class translation factor GTPase superfamily. Classic translation factor GTPase family. IF-2 subfamily.

It localises to the cytoplasm. Its function is as follows. One of the essential components for the initiation of protein synthesis. Protects formylmethionyl-tRNA from spontaneous hydrolysis and promotes its binding to the 30S ribosomal subunits. Also involved in the hydrolysis of GTP during the formation of the 70S ribosomal complex. The protein is Translation initiation factor IF-2 of Thermosynechococcus vestitus (strain NIES-2133 / IAM M-273 / BP-1).